The following is an 89-amino-acid chain: Neurotoxin beta-KTx 12 (89 aa).

An N-terminal signal peptide occupies residues 1–20 (MKQYIFFLALIVLVSTFAEA). Residues 21 to 39 (GKKTEILDKVKKVFSKAKD) constitute a propeptide that is removed on maturation. The BetaSPN-type CS-alpha/beta domain occupies 53 to 89 (ELGCPFIDKWCEDHCESKKLVGKCENFDCSCVKLGGK). Cystine bridges form between cysteine 56–cysteine 76, cysteine 63–cysteine 81, and cysteine 67–cysteine 83.

The protein belongs to the long chain scorpion toxin family. Class 2 subfamily. In terms of tissue distribution, expressed by the venom gland.

It is found in the secreted. Its function is as follows. Inhibits voltage-gated potassium channel. The sequence is that of Neurotoxin beta-KTx 12 from Lychas mucronatus (Chinese swimming scorpion).